Here is a 603-residue protein sequence, read N- to C-terminus: NADH-ubiquinone oxidoreductase chain 5 (603 aa).

16 helical membrane passes run 4 to 24, 38 to 58, 87 to 107, 117 to 137, 140 to 160, 171 to 191, 211 to 233, 241 to 261, 273 to 293, 301 to 320, 331 to 351, 366 to 386, 409 to 429, 457 to 477, 488 to 508, and 583 to 603; these read LPTL…LSPL, MAVS…MHSG, LIFM…SLWY, FFKY…ANNL, LFIG…WWYG, AMIY…WFLL, LPLT…HPWL, TPVS…FLLI, ILTL…ICAL, IIAF…IGIN, THAF…HSLG, LPFT…MPFL, LLIT…IIFF, LMLG…PTTV, FMAL…SSFT, and MIKL…LLII.

It belongs to the complex I subunit 5 family.

The protein localises to the mitochondrion inner membrane. The catalysed reaction is a ubiquinone + NADH + 5 H(+)(in) = a ubiquinol + NAD(+) + 4 H(+)(out). Core subunit of the mitochondrial membrane respiratory chain NADH dehydrogenase (Complex I) that is believed to belong to the minimal assembly required for catalysis. Complex I functions in the transfer of electrons from NADH to the respiratory chain. The immediate electron acceptor for the enzyme is believed to be ubiquinone. In Dugong dugon (Dugong), this protein is NADH-ubiquinone oxidoreductase chain 5 (MT-ND5).